The following is a 286-amino-acid chain: NADPH-dependent 7-cyano-7-deazaguanine reductase (286 aa).

92–94 (IES) lines the substrate pocket. Position 94-95 (94-95 (SK)) interacts with NADPH. Catalysis depends on cysteine 194, which acts as the Thioimide intermediate. Aspartate 201 serves as the catalytic Proton donor. Position 233 to 234 (233 to 234 (HE)) interacts with substrate. 262 to 263 (RG) is a binding site for NADPH.

This sequence belongs to the GTP cyclohydrolase I family. QueF type 2 subfamily. Homodimer.

The protein resides in the cytoplasm. It catalyses the reaction 7-aminomethyl-7-carbaguanine + 2 NADP(+) = 7-cyano-7-deazaguanine + 2 NADPH + 3 H(+). Its pathway is tRNA modification; tRNA-queuosine biosynthesis. In terms of biological role, catalyzes the NADPH-dependent reduction of 7-cyano-7-deazaguanine (preQ0) to 7-aminomethyl-7-deazaguanine (preQ1). The sequence is that of NADPH-dependent 7-cyano-7-deazaguanine reductase from Shewanella sp. (strain MR-4).